The chain runs to 458 residues: Phosphoglucosamine mutase (458 aa).

S100 functions as the Phosphoserine intermediate in the catalytic mechanism. Residues S100, D254, D256, and D258 each coordinate Mg(2+). S100 carries the post-translational modification Phosphoserine.

Belongs to the phosphohexose mutase family. It depends on Mg(2+) as a cofactor. Post-translationally, activated by phosphorylation.

The enzyme catalyses alpha-D-glucosamine 1-phosphate = D-glucosamine 6-phosphate. Catalyzes the conversion of glucosamine-6-phosphate to glucosamine-1-phosphate. This is Phosphoglucosamine mutase from Nocardia farcinica (strain IFM 10152).